A 281-amino-acid polypeptide reads, in one-letter code: 3-hydroxyanthranilate 3,4-dioxygenase (281 aa).

Residues 1 to 162 are domain A (catalytic); sequence MSGVTAIEIP…SNEFKTGKPG (162 aa). Arg45 contacts O2. Residues His49, Glu55, and His93 each contribute to the Fe cation site. Glu55 is a substrate binding site. 2 residues coordinate substrate: Arg97 and Glu107. Residues 163-179 form a linker region; the sequence is KGTFACNAPYEARWTDL. The tract at residues 180–281 is domain B; that stretch reads PVPINRKEFI…GFAITIRMPA (102 aa).

It belongs to the 3-HAO family. The cofactor is Fe(2+).

It localises to the cytoplasm. It catalyses the reaction 3-hydroxyanthranilate + O2 = (2Z,4Z)-2-amino-3-carboxymuconate 6-semialdehyde. Its pathway is cofactor biosynthesis; NAD(+) biosynthesis; quinolinate from L-kynurenine: step 3/3. Its function is as follows. Catalyzes the oxidative ring opening of 3-hydroxyanthranilate to 2-amino-3-carboxymuconate semialdehyde, which spontaneously cyclizes to quinolinate. The protein is 3-hydroxyanthranilate 3,4-dioxygenase (haao-1) of Caenorhabditis elegans.